The primary structure comprises 261 residues: Small ribosomal subunit protein eS1A (261 aa).

A compositionally biased stretch (basic residues) spans 1 to 18; that stretch reads MTLGKNKRISKGGKRGKK. The tract at residues 1–23 is disordered; the sequence is MTLGKNKRISKGGKRGKKKTQET.

The protein belongs to the eukaryotic ribosomal protein eS1 family. As to quaternary structure, component of the small ribosomal subunit. Mature ribosomes consist of a small (40S) and a large (60S) subunit. The 40S subunit contains about 33 different proteins and 1 molecule of RNA (18S). The 60S subunit contains about 49 different proteins and 3 molecules of RNA (25S, 5.8S and 5S).

The protein localises to the cytoplasm. This chain is Small ribosomal subunit protein eS1A, found in Trypanosoma cruzi (strain CL Brener).